Reading from the N-terminus, the 875-residue chain is Leucine--tRNA ligase (875 aa).

A compositionally biased stretch (polar residues) spans 1 to 20 (MPSAGSVNAANPAVDTSAQT). Residues 1–22 (MPSAGSVNAANPAVDTSAQTGR) form a disordered region. The short motif at 60–70 (PYPSGSLHMGH) is the 'HIGH' region element. A 'KMSKS' region motif is present at residues 634–638 (KMSKS). K637 contacts ATP.

This sequence belongs to the class-I aminoacyl-tRNA synthetase family.

Its subcellular location is the cytoplasm. The enzyme catalyses tRNA(Leu) + L-leucine + ATP = L-leucyl-tRNA(Leu) + AMP + diphosphate. This chain is Leucine--tRNA ligase, found in Synechococcus sp. (strain CC9605).